The primary structure comprises 261 residues: Proline-rich protein HaeIII subfamily 1 (261 aa).

Positions 1 to 15 (MLVVLFTVALLALSS) are cleaved as a signal peptide. The interval 15-261 (SAQGPREENQ…PPQGRPQGPR (247 aa)) is disordered. Pro residues-rich tracts occupy residues 32–44 (QRPPPSGFQPRPP) and 51–237 (GPPP…PPTG). The segment covering 238-261 (GPQQTPPLAGNTQGPPQGRPQGPR) has biased composition (low complexity).

Its subcellular location is the secreted. The polypeptide is Proline-rich protein HaeIII subfamily 1 (Prh1) (Mus musculus (Mouse)).